A 301-amino-acid chain; its full sequence is D-alanine--D-alanine ligase (301 aa).

Residues 101–296 (KLMWRAAGLA…YPTLVRRVLE (196 aa)) form the ATP-grasp domain. Position 127–182 (127–182 (EEELGLPLFVKPAREGSSIGVTKVKERGALKAAYEEAARHDPLVIAEKGVMGGEYT)) interacts with ATP. The Mg(2+) site is built by Asp-250, Glu-263, and Asn-265.

It belongs to the D-alanine--D-alanine ligase family. Mg(2+) is required as a cofactor. Requires Mn(2+) as cofactor.

The protein localises to the cytoplasm. The enzyme catalyses 2 D-alanine + ATP = D-alanyl-D-alanine + ADP + phosphate + H(+). Its pathway is cell wall biogenesis; peptidoglycan biosynthesis. In terms of biological role, cell wall formation. The sequence is that of D-alanine--D-alanine ligase from Dechloromonas aromatica (strain RCB).